The chain runs to 211 residues: Eukaryotic translation initiation factor 4E (211 aa).

Belongs to the eukaryotic initiation factor 4E family. In terms of assembly, eIF4F is a multi-subunit complex, the composition of which varies with external and internal environmental conditions. It is composed of at least eIF4A, eIF4E and eIF4G. eIF4E is also known to interact with other partners.

Recognizes and binds the 7-methylguanosine-containing mRNA cap during an early step in the initiation of protein synthesis and facilitates ribosome binding by inducing the unwinding of the mRNAs secondary structures. The polypeptide is Eukaryotic translation initiation factor 4E (TIF45) (Eremothecium gossypii (strain ATCC 10895 / CBS 109.51 / FGSC 9923 / NRRL Y-1056) (Yeast)).